A 106-amino-acid polypeptide reads, in one-letter code: uncharacterized protein (106 aa).

2 helical membrane passes run A17–V37 and F55–F75.

The protein resides in the membrane. This is an uncharacterized protein from Saccharomyces cerevisiae (strain ATCC 204508 / S288c) (Baker's yeast).